The chain runs to 167 residues: Translation initiation factor IF-3 (167 aa).

It belongs to the IF-3 family. As to quaternary structure, monomer.

It is found in the cytoplasm. Its function is as follows. IF-3 binds to the 30S ribosomal subunit and shifts the equilibrium between 70S ribosomes and their 50S and 30S subunits in favor of the free subunits, thus enhancing the availability of 30S subunits on which protein synthesis initiation begins. The polypeptide is Translation initiation factor IF-3 (Bacillus cereus (strain ATCC 14579 / DSM 31 / CCUG 7414 / JCM 2152 / NBRC 15305 / NCIMB 9373 / NCTC 2599 / NRRL B-3711)).